A 395-amino-acid chain; its full sequence is MSDSSDGYAKPMTINFGPQHPAAHGVMRLILEMSGEVIERIDPHIGLLHRGTEKLIEYKTYLQALPYFDRLDYVSPMSQEHAYSLCVERLLGCEVPIRAKYLRVIFCELTRLLNHLLNVACQALDSGATTPLLWIFEEREKILSFYERASGARFHSAYIRPGGLAADVPDGLLDDIHEFTNYFPKLLDSVDDLLTENSIWKQRNVEIGKVTKQQALDWGFSGPMLRACGIPWDLRKSQPYEIYDILDFKVPVGSNGDCYDRYLVRMAEIRESLYILEQCLRDIPSGPVKTDDRKIAPPKREELKYSMEALIHHFKLFSEGYKVPEGEAYAAVEAPKGEFGVYIVSDGTNKPYRCRIRSPGFAHLQAIDAMARGHMLADLPVIIGSLDIVFGEIDR.

Belongs to the complex I 49 kDa subunit family. In terms of assembly, NDH-1 is composed of 14 different subunits. Subunits NuoB, C, D, E, F, and G constitute the peripheral sector of the complex.

Its subcellular location is the cell inner membrane. The enzyme catalyses a quinone + NADH + 5 H(+)(in) = a quinol + NAD(+) + 4 H(+)(out). Its function is as follows. NDH-1 shuttles electrons from NADH, via FMN and iron-sulfur (Fe-S) centers, to quinones in the respiratory chain. The immediate electron acceptor for the enzyme in this species is believed to be ubiquinone. Couples the redox reaction to proton translocation (for every two electrons transferred, four hydrogen ions are translocated across the cytoplasmic membrane), and thus conserves the redox energy in a proton gradient. This is NADH-quinone oxidoreductase subunit D from Anaplasma phagocytophilum (strain HZ).